A 922-amino-acid polypeptide reads, in one-letter code: MRFSLCGFPLVFSFTLLSVFDTSLSATTISLTPEDSFHGDSQNAERSYNVQAGDVYSLTGDVSISNVDNSALNKACFNVTSGSVTFAGNHHGLYFNNISSGTTKEGAVLCCQDPQATARFSGFSTLSFIQSPGDIKEQGCLYSKNALMLLNNYVVRFEQNQSKTKGGAISGANVTIVGNYDSVSFYQNAATFGGAIHSSGPLQIAVNQAEIRFAQNTAKNGSGGALYSDGDIDIDQNAYVLFRENEALTTAIGKGGAVCCLPTSGSSTPVPIVTFSDNKQLVFERNHSIMGGGAIYARKLSISSGGPTLFINNISYANSQNLGGAIAIDTGGEISLSAEKGTITFQGNRTSLPFLNGIHLLQNAKFLKLQARNGYSIEFYDPITSEADGSTQLNINGDPKNKEYTGTILFSGEKSLANDPRDFKSTIPQNVNLSAGYLVIKEGAEVTVSKFTQSPGSHLVLDLGTKLIASKEDIAITGLAIDIDSLSSSSTAAVIKANTANKQISVTDSIELISPTGNAYEDLRMRNSQTFPLLSLEPGAGGSVTVTAGDFLPVSPHYGFQGNWKLAWTGTGNKVGEFFWDKINYKPRPEKEGNLVPNILWGNAVDVRSLMQVQETHASSLQTDRGLWIDGIGNFFHVSASEDNIRYRHNSGGYVLSVNNEITPKHYTSMAFSQLFSRDKDYAVSNNEYRMYLGSYLYQYTTSLGNIFRYASRNPNVNVGILSRRFLQNPLMIFHFLCAYGHATNDMKTDYANFPMVKNSWRNNCWAIECGGSMPLLVFENGRLFQGAIPFMKLQLVYAYQGDFKETTADGRRFSNGSLTSISVPLGIRFEKLALSQDVLYDFSFSYIPDIFRKDPSCEAALVISGDSWLVPAAHVSRHAFVGSGTGRYHFNDYTELLCRGSIECRPHARNYNINCGSKFRF.

The N-terminal stretch at 1–26 (MRFSLCGFPLVFSFTLLSVFDTSLSA) is a signal peptide. Residues 620-922 (SLQTDRGLWI…NINCGSKFRF (303 aa)) enclose the Autotransporter domain.

The protein belongs to the PMP outer membrane protein family.

The protein resides in the secreted. Its subcellular location is the cell wall. It localises to the cell outer membrane. This Chlamydia pneumoniae (Chlamydophila pneumoniae) protein is Probable outer membrane protein pmp1 (pmp1).